The chain runs to 361 residues: Phosphoserine aminotransferase (361 aa).

L-glutamate is bound by residues S9 and R42. Residues 76–77 (GR), W102, T153, D173, and Q196 contribute to the pyridoxal 5'-phosphate site. The residue at position 197 (K197) is an N6-(pyridoxal phosphate)lysine. A pyridoxal 5'-phosphate-binding site is contributed by 238–239 (NT).

Belongs to the class-V pyridoxal-phosphate-dependent aminotransferase family. SerC subfamily. In terms of assembly, homodimer. Pyridoxal 5'-phosphate is required as a cofactor.

It is found in the cytoplasm. It catalyses the reaction O-phospho-L-serine + 2-oxoglutarate = 3-phosphooxypyruvate + L-glutamate. The enzyme catalyses 4-(phosphooxy)-L-threonine + 2-oxoglutarate = (R)-3-hydroxy-2-oxo-4-phosphooxybutanoate + L-glutamate. Its pathway is amino-acid biosynthesis; L-serine biosynthesis; L-serine from 3-phospho-D-glycerate: step 2/3. It participates in cofactor biosynthesis; pyridoxine 5'-phosphate biosynthesis; pyridoxine 5'-phosphate from D-erythrose 4-phosphate: step 3/5. In terms of biological role, catalyzes the reversible conversion of 3-phosphohydroxypyruvate to phosphoserine and of 3-hydroxy-2-oxo-4-phosphonooxybutanoate to phosphohydroxythreonine. This Cronobacter sakazakii (strain ATCC BAA-894) (Enterobacter sakazakii) protein is Phosphoserine aminotransferase.